Reading from the N-terminus, the 1164-residue chain is DNA-directed RNA polymerase 133 kDa polypeptide (1164 aa).

The protein belongs to the RNA polymerase beta chain family. As to quaternary structure, the DNA-dependent RNA polymerase used for intermediate and late genes expression consists of eight subunits 147 kDa, 133 kDa, 35 kDa, 30 kDa, 22 kDa, 19 kDa, 18 kDa and 7 kDa totalling more than 500 kDa in mass. The same holoenzyme, with the addition of the transcription-specificity factor RAP94, is used for early gene expression.

The protein localises to the virion. It catalyses the reaction RNA(n) + a ribonucleoside 5'-triphosphate = RNA(n+1) + diphosphate. Functionally, part of the DNA-dependent RNA polymerase which catalyzes the transcription of viral DNA into RNA using the four ribonucleoside triphosphates as substrates. Responsible for the transcription of early, intermediate and late genes. DNA-dependent RNA polymerase associates with the early transcription factor (ETF), itself composed of OPG118 and OPG133, thereby allowing the early genes transcription. Late transcription, and probably also intermediate transcription, require newly synthesized RNA polymerase. The chain is DNA-directed RNA polymerase 133 kDa polypeptide (OPG151) from Homo sapiens (Human).